The sequence spans 152 residues: Endoribonuclease YbeY (152 aa).

Residues His116, His120, and His126 each coordinate Zn(2+).

Belongs to the endoribonuclease YbeY family. It depends on Zn(2+) as a cofactor.

It localises to the cytoplasm. Its function is as follows. Single strand-specific metallo-endoribonuclease involved in late-stage 70S ribosome quality control and in maturation of the 3' terminus of the 16S rRNA. The polypeptide is Endoribonuclease YbeY (Mycoplasma mobile (strain ATCC 43663 / 163K / NCTC 11711) (Mesomycoplasma mobile)).